Here is a 550-residue protein sequence, read N- to C-terminus: Rab GTPase-activating protein 22 (550 aa).

The segment at 1–49 (MKALRRSYTSTSSGNSSSSSSLPSSSSSSLPSSSSSSPPSSNSNSYSNS) is disordered. Residues 7–49 (SYTSTSSGNSSSSSSLPSSSSSSLPSSSSSSPPSSNSNSYSNS) are compositionally biased toward low complexity. Residues 126–460 (GVDPSIRAEV…CLWEVMWADQ (335 aa)) enclose the Rab-GAP TBC domain.

Interacts with AGT1 in peroxisome under biotic stress conditions. In terms of tissue distribution, expressed in root meristems, vascular tissues, guard cells, trichomes, styles and receptacles.

It localises to the nucleus. It is found in the peroxisome. Involved in defense response against fungal and bacterial pathogens. Acts as a negative regulator of jasmonate (JA) responses during infection by the soil-born fungal pathogen Verticillium longisporum. Involved in abscisic acid-dependent stomata closure in response to infection by V.longisporum and Pseudomonas syringae. May be a downstream component of brassinosteroid-mediated signaling. This is Rab GTPase-activating protein 22 from Arabidopsis thaliana (Mouse-ear cress).